A 335-amino-acid chain; its full sequence is MWLEATTHPGLEDLLLEELSALYPGEGAEVDARKGRVRIPRAWVGEEALGLRLAHHLVLFRARLLLSREDPLGALERAALALPWPELEGAGSFRVEARREGEHPFTSPEVERRVGEALHRAYGVPVDLKRPAVRVRVDVRGEEAFLGVQLTERPLSRRFPKAALRGSLTPVLAQALLRLADARPGMRVLDPFTGSGTIALEAASTLGPTSPVYAGDLDEKRLGLAREAALASGLSWIRFLRADARHLPRFFPEVDRILANPPHGLRLGRKEGLFHLYWDFLRGALALLPPGGRVALLTLRPALLKRALPPGFALRHARVVEQGGVYPRVFVLEKL.

Positions 47 to 150 constitute a THUMP domain; that stretch reads EALGLRLAHH…GEEAFLGVQL (104 aa). Residues 195 to 197, 243 to 244, and Asn-260 each bind S-adenosyl-L-methionine; these read SGT and DA.

Belongs to the methyltransferase superfamily. In terms of assembly, monomer in solution.

It is found in the cytoplasm. It catalyses the reaction guanosine(6) in tRNA + S-adenosyl-L-methionine = N(2)-methylguanosine(6) in tRNA + S-adenosyl-L-homocysteine + H(+). Functionally, S-adenosyl-L-methionine-dependent methyltransferase that catalyzes the methylation of the guanosine nucleotide at position 6 (m2G6) in tRNA(Phe). This chain is tRNA (guanine(6)-N2)-methyltransferase, found in Thermus thermophilus (strain ATCC BAA-163 / DSM 7039 / HB27).